The chain runs to 77 residues: Serine protease inhibitor 3 (77 aa).

The N-terminal stretch at methionine 1–alanine 17 is a signal peptide. 4 cysteine pairs are disulfide-bonded: cysteine 21–cysteine 53, cysteine 30–cysteine 48, cysteine 33–cysteine 44, and cysteine 55–cysteine 68. The region spanning cysteine 21–cysteine 74 is the TIL domain.

The protein resides in the secreted. Its function is as follows. Defends the organism against the host's proteinases. The polypeptide is Serine protease inhibitor 3 (Anisakis simplex (Herring worm)).